The primary structure comprises 296 residues: Developmental pluripotency-associated protein 4 (296 aa).

Residues 1-13 show a composition bias toward basic and acidic residues; the sequence is METAGDKKWSAEE. The tract at residues 1-73 is disordered; the sequence is METAGDKKWS…QTRRKVPIPP (73 aa). Low complexity predominate over residues 23-34; it reads SSQPSTAPAKAK. The span at 42–58 shows a compositional bias: basic and acidic residues; sequence KSETDNGCKPKEGKPQD.

Interacts with DPPA2. Interacts with PCGF1. In terms of tissue distribution, expressed in pluripotent embryonic cells, but not in differentiated somatic tissues.

The protein localises to the nucleus. Its function is as follows. May be involved in the maintenance of active epigenetic status of target genes. May inhibit differentiation of embryonic stem (ES) cells into a primitive ectoderm lineage. The protein is Developmental pluripotency-associated protein 4 (Dppa4) of Mus musculus (Mouse).